The primary structure comprises 403 residues: Arginine biosynthesis bifunctional protein ArgJ (403 aa).

The substrate site is built by Thr-149, Lys-175, Thr-186, Glu-272, Asn-398, and Thr-403. Catalysis depends on Thr-186, which acts as the Nucleophile.

This sequence belongs to the ArgJ family. Heterotetramer of two alpha and two beta chains.

The protein resides in the cytoplasm. The enzyme catalyses N(2)-acetyl-L-ornithine + L-glutamate = N-acetyl-L-glutamate + L-ornithine. The catalysed reaction is L-glutamate + acetyl-CoA = N-acetyl-L-glutamate + CoA + H(+). The protein operates within amino-acid biosynthesis; L-arginine biosynthesis; L-ornithine and N-acetyl-L-glutamate from L-glutamate and N(2)-acetyl-L-ornithine (cyclic): step 1/1. It functions in the pathway amino-acid biosynthesis; L-arginine biosynthesis; N(2)-acetyl-L-ornithine from L-glutamate: step 1/4. Catalyzes two activities which are involved in the cyclic version of arginine biosynthesis: the synthesis of N-acetylglutamate from glutamate and acetyl-CoA as the acetyl donor, and of ornithine by transacetylation between N(2)-acetylornithine and glutamate. This Caldanaerobacter subterraneus subsp. tengcongensis (strain DSM 15242 / JCM 11007 / NBRC 100824 / MB4) (Thermoanaerobacter tengcongensis) protein is Arginine biosynthesis bifunctional protein ArgJ.